The following is a 96-amino-acid chain: Protein RnfH (96 aa).

This sequence belongs to the UPF0125 (RnfH) family.

This chain is Protein RnfH, found in Hahella chejuensis (strain KCTC 2396).